Reading from the N-terminus, the 341-residue chain is uncharacterized protein (341 aa).

A disordered region spans residues 125–146; that stretch reads DTVKHNGSGPRPEQASSHVHYS.

Belongs to the cycloisomerase 2 family.

This is an uncharacterized protein from Lactococcus lactis subsp. cremoris (strain MG1363).